We begin with the raw amino-acid sequence, 323 residues long: Acetyl-coenzyme A carboxylase carboxyl transferase subunit alpha (323 aa).

The region spanning 40-293 (LAEKSLQLTK…RKALAESLKT (254 aa)) is the CoA carboxyltransferase C-terminal domain.

It belongs to the AccA family. In terms of assembly, acetyl-CoA carboxylase is a heterohexamer composed of biotin carboxyl carrier protein (AccB), biotin carboxylase (AccC) and two subunits each of ACCase subunit alpha (AccA) and ACCase subunit beta (AccD).

It is found in the cytoplasm. The enzyme catalyses N(6)-carboxybiotinyl-L-lysyl-[protein] + acetyl-CoA = N(6)-biotinyl-L-lysyl-[protein] + malonyl-CoA. It functions in the pathway lipid metabolism; malonyl-CoA biosynthesis; malonyl-CoA from acetyl-CoA: step 1/1. Its function is as follows. Component of the acetyl coenzyme A carboxylase (ACC) complex. First, biotin carboxylase catalyzes the carboxylation of biotin on its carrier protein (BCCP) and then the CO(2) group is transferred by the carboxyltransferase to acetyl-CoA to form malonyl-CoA. This chain is Acetyl-coenzyme A carboxylase carboxyl transferase subunit alpha, found in Polynucleobacter necessarius subsp. necessarius (strain STIR1).